A 601-amino-acid chain; its full sequence is Elongation factor 4 (601 aa).

In terms of domain architecture, tr-type G spans Asn-6 to His-188. GTP-binding positions include Asp-18 to Thr-23 and Asn-135 to Asp-138.

The protein belongs to the TRAFAC class translation factor GTPase superfamily. Classic translation factor GTPase family. LepA subfamily.

It is found in the cell inner membrane. It catalyses the reaction GTP + H2O = GDP + phosphate + H(+). Required for accurate and efficient protein synthesis under certain stress conditions. May act as a fidelity factor of the translation reaction, by catalyzing a one-codon backward translocation of tRNAs on improperly translocated ribosomes. Back-translocation proceeds from a post-translocation (POST) complex to a pre-translocation (PRE) complex, thus giving elongation factor G a second chance to translocate the tRNAs correctly. Binds to ribosomes in a GTP-dependent manner. The chain is Elongation factor 4 from Bartonella quintana (strain Toulouse) (Rochalimaea quintana).